A 556-amino-acid chain; its full sequence is Oxygen-dependent choline dehydrogenase (556 aa).

An FAD-binding site is contributed by 6 to 35 (DYIIIGAGSAGNVLAARLTEDPGVSVLLLE). His-475 acts as the Proton acceptor in catalysis.

Belongs to the GMC oxidoreductase family. The cofactor is FAD.

The enzyme catalyses choline + A = betaine aldehyde + AH2. It catalyses the reaction betaine aldehyde + NAD(+) + H2O = glycine betaine + NADH + 2 H(+). It participates in amine and polyamine biosynthesis; betaine biosynthesis via choline pathway; betaine aldehyde from choline (cytochrome c reductase route): step 1/1. Involved in the biosynthesis of the osmoprotectant glycine betaine. Catalyzes the oxidation of choline to betaine aldehyde and betaine aldehyde to glycine betaine at the same rate. This Xanthomonas campestris pv. campestris (strain 8004) protein is Oxygen-dependent choline dehydrogenase.